Reading from the N-terminus, the 128-residue chain is Large ribosomal subunit protein bL12 (128 aa).

This sequence belongs to the bacterial ribosomal protein bL12 family. In terms of assembly, homodimer. Part of the ribosomal stalk of the 50S ribosomal subunit. Forms a multimeric L10(L12)X complex, where L10 forms an elongated spine to which 2 to 4 L12 dimers bind in a sequential fashion. Binds GTP-bound translation factors.

In terms of biological role, forms part of the ribosomal stalk which helps the ribosome interact with GTP-bound translation factors. Is thus essential for accurate translation. The sequence is that of Large ribosomal subunit protein bL12 from Kocuria rhizophila (strain ATCC 9341 / DSM 348 / NBRC 103217 / DC2201).